We begin with the raw amino-acid sequence, 352 residues long: Uricase (352 aa).

Residues 1–32 form a disordered region; the sequence is MFATPLRQPAAANHQTPKNSAGMDEHGKPYQY. The segment covering 23 to 32 has biased composition (basic and acidic residues); the sequence is MDEHGKPYQY. Catalysis depends on charge relay system residues lysine 41 and threonine 86. Residues threonine 86, aspartate 87, phenylalanine 214, arginine 231, valine 279, glutamine 280, and asparagine 306 each coordinate urate. Catalysis depends on histidine 308, which acts as the Charge relay system. The Microbody targeting signal signature appears at 350–352; that stretch reads SHL.

It belongs to the uricase family. As to expression, malpighian tubules.

The protein resides in the peroxisome. The catalysed reaction is urate + O2 + H2O = 5-hydroxyisourate + H2O2. Its pathway is purine metabolism; urate degradation; (S)-allantoin from urate: step 1/3. Its activity is regulated as follows. Repressed by 20-hydroxyecdysone. In terms of biological role, catalyzes the oxidation of uric acid to 5-hydroxyisourate, which is further processed to form (S)-allantoin. This Drosophila melanogaster (Fruit fly) protein is Uricase (Uro).